A 742-amino-acid chain; its full sequence is MSLLLEPNAAMIKEQKLYREMGLTDEEFARIEAILGRLPNYTETGIFSVMWSEHCSYKNSKPVLKKFPTDGPHVLQGPGEGAGIVDIGDGLAVAFKIESHNHPSAIEPYQGAATGVGGIIRDVFSMGARPIALLNSLRFGELTSPRVKYLFEHVVAGIAGYGNCIGIPTVGGEVQFDPAYEGNPLVNAMCVGIIRHEDIQRGVATGVGNTVMYVGAKTGRDGIHGATFASEELSEQSEAKRPAVQVGDPFMEKLLLEACLEAVKSDALVGIQDMGAAGLTSSSAEMASKGGFGIEMNLDLVPQRETGMTPYEMMLSESQERMLLVVEQGREEEIAAIFAKYGLEAKAIGKVTDDKMLRLFFHGEVVAEIPVDALAKDAPVYHKPSAEPDYYREFQAMPTYIPQIEDYNRTLLGLLAQPTIASKEWVYDQYDYMVRTNTVVAPGSDAAVVRIRGTNKALALTTDCNSRYLYLDPEMGGKIAVAEAARNVVCSGAKPLAITDCLNFGNPEKPDIFWQLEKAVDGMSEACRTLGTPVVSGNVSLYNETNGEAVYPTPVVGMVGLVDDLSHVTTQPFKQAGDLIYVIGEAKPEFGGSELQKWLEGRIFGKAPELDLAVEASRQRQLLTAIRAGVVASAHDVAEGGLAVALAECVIGASGLGANVTVSGDLVSELFSETQSRFVVSVKKEHQEAFEQLVEAKLIGEVTNDSILTVNGEHGGTVIRLSVDEMRNVWKGAIPCLLKSKD.

The active site involves His54. ATP-binding residues include Tyr57 and Lys96. Position 98 (Glu98) interacts with Mg(2+). Residues 99–102 (SHNH) and Arg121 each bind substrate. His100 (proton acceptor) is an active-site residue. Residue Asp122 coordinates Mg(2+). Gln245 lines the substrate pocket. Asp273 is a binding site for Mg(2+). 317–319 (ESQ) contributes to the substrate binding site. Residues Asp500 and Gly537 each coordinate ATP. Asn538 serves as a coordination point for Mg(2+). A substrate-binding site is contributed by Ser540.

Belongs to the FGAMS family. Monomer. Part of the FGAM synthase complex composed of 1 PurL, 1 PurQ and 2 PurS subunits.

It is found in the cytoplasm. The enzyme catalyses N(2)-formyl-N(1)-(5-phospho-beta-D-ribosyl)glycinamide + L-glutamine + ATP + H2O = 2-formamido-N(1)-(5-O-phospho-beta-D-ribosyl)acetamidine + L-glutamate + ADP + phosphate + H(+). It participates in purine metabolism; IMP biosynthesis via de novo pathway; 5-amino-1-(5-phospho-D-ribosyl)imidazole from N(2)-formyl-N(1)-(5-phospho-D-ribosyl)glycinamide: step 1/2. Its function is as follows. Part of the phosphoribosylformylglycinamidine synthase complex involved in the purines biosynthetic pathway. Catalyzes the ATP-dependent conversion of formylglycinamide ribonucleotide (FGAR) and glutamine to yield formylglycinamidine ribonucleotide (FGAM) and glutamate. The FGAM synthase complex is composed of three subunits. PurQ produces an ammonia molecule by converting glutamine to glutamate. PurL transfers the ammonia molecule to FGAR to form FGAM in an ATP-dependent manner. PurS interacts with PurQ and PurL and is thought to assist in the transfer of the ammonia molecule from PurQ to PurL. The protein is Phosphoribosylformylglycinamidine synthase subunit PurL of Geobacillus thermodenitrificans (strain NG80-2).